We begin with the raw amino-acid sequence, 506 residues long: ATP synthase subunit alpha (506 aa).

Residue 171 to 178 (GDRQTGKT) coordinates ATP.

This sequence belongs to the ATPase alpha/beta chains family. F-type ATPases have 2 components, CF(1) - the catalytic core - and CF(0) - the membrane proton channel. CF(1) has five subunits: alpha(3), beta(3), gamma(1), delta(1), epsilon(1). CF(0) has four main subunits: a, b, b' and c.

It is found in the cellular thylakoid membrane. It catalyses the reaction ATP + H2O + 4 H(+)(in) = ADP + phosphate + 5 H(+)(out). Its function is as follows. Produces ATP from ADP in the presence of a proton gradient across the membrane. The alpha chain is a regulatory subunit. The polypeptide is ATP synthase subunit alpha (Nostoc punctiforme (strain ATCC 29133 / PCC 73102)).